Reading from the N-terminus, the 359-residue chain is C-X-C chemokine receptor type 2 (359 aa).

Residues 1 to 47 (MGEFKVDKFNIEDFFSGDLDIFNYSSGMPSILPDAVPCHSENLEINS) are Extracellular-facing. Residue Asn23 is glycosylated (N-linked (GlcNAc...) asparagine). Residues 48 to 74 (YAVVVIYVLVTLLSLVGNSLVMLVILY) traverse the membrane as a helical segment. At 75 to 83 (NRSTCSVTD) the chain is on the cytoplasmic side. Residues 84 to 104 (VYLLNLAIADLFFALTLPVWA) traverse the membrane as a helical segment. The Extracellular segment spans residues 105–119 (ASKVNGWTFGSTLCK). Cys118 and Cys195 are joined by a disulfide. A helical transmembrane segment spans residues 120–141 (IFSYVKEVTFYSSVLLLACISM). Over 142–162 (DRYLAIVHATSTLIQKRHLVK) the chain is Cytoplasmic. Residues 163-182 (FVCIAMWLLSVILALPILIL) form a helical membrane-spanning segment. Residues 183–207 (RNPVKVNLSTLVCYEDVGNNTSRLR) are Extracellular-facing. A helical transmembrane segment spans residues 208 to 230 (VVLRILPQTFGFLVPLLIMLFCY). Residues 231–250 (GFTLRTLFKAHMGQKHRAMR) are Cytoplasmic-facing. A helical transmembrane segment spans residues 251 to 272 (VIFAVVLVFLLCWLPYNLVLFT). Residues 273–293 (DTLMRTKLIKETCERRDDIDK) lie on the Extracellular side of the membrane. The helical transmembrane segment at 294–314 (ALNATEILGFLHSCLNPIIYA) threads the bilayer. The Cytoplasmic segment spans residues 315–359 (FIGQKFRHGLLKIMATYGLVSKEFLAKEGRPSFVSSSSANTSTTL).

Belongs to the G-protein coupled receptor 1 family. Interacts with IL8. Interacts with GNAI2. Phosphorylated upon ligand binding; which is required for desensitization.

It is found in the cell membrane. Receptor for interleukin-8 which is a powerful neutrophil chemotactic factor. Binding of IL-8 to the receptor causes activation of neutrophils. This response is mediated via a G-protein that activates a phosphatidylinositol-calcium second messenger system. Binds to IL-8 with high affinity. Also binds with high affinity to CXCL3, GRO/MGSA and NAP-2. In Mus musculus (Mouse), this protein is C-X-C chemokine receptor type 2 (Cxcr2).